We begin with the raw amino-acid sequence, 639 residues long: Extracellular metalloproteinase 1 (639 aa).

Residues 1-19 form the signal peptide; it reads MHGLLLAAGLISLPLHVLA. The propeptide occupies 20–250; the sequence is HPQPSSTSLA…VHNVVDYVAH (231 aa). Residue Asn-291 is glycosylated (N-linked (GlcNAc...) asparagine). Residue His-434 coordinates Zn(2+). Glu-435 is an active-site residue. A Zn(2+)-binding site is contributed by His-438. Asn-598 carries N-linked (GlcNAc...) asparagine glycosylation.

This sequence belongs to the peptidase M36 family. The cofactor is Zn(2+).

It is found in the secreted. Functionally, secreted metalloproteinase probably acting as a virulence factor. The polypeptide is Extracellular metalloproteinase 1 (MEP1) (Arthroderma otae (strain ATCC MYA-4605 / CBS 113480) (Microsporum canis)).